The chain runs to 661 residues: DnaJ protein ERDJ2B (661 aa).

The Lumenal segment spans residues 1–8 (MAESEENS). A helical transmembrane segment spans residues 9-29 (VLFPIFILTMMAIPLVPYTFV). Residues 30 to 65 (KLSRAFSKKQRSIHCQCLECDRSGKYKRSISQSISS) are Cytoplasmic-facing. A helical transmembrane segment spans residues 66 to 86 (FTSCSNLTVVLLWIVMIFLIY). Topologically, residues 87–190 (HTKNMSRESQ…FILNMNGESG (104 aa)) are lumenal. Residue Asn-90 is glycosylated (N-linked (GlcNAc...) asparagine). In terms of domain architecture, J spans 99–164 (EPFGILGLEP…LSRENFEKYG (66 aa)). A helical membrane pass occupies residues 191–211 (GILLLCTVGLCILLPLVIASI). The SEC63 domain maps to 206–597 (LVIASIYLWR…IGCDQKTSLK (392 aa)). Topologically, residues 212 to 661 (YLWRSSKYTG…SSEESGSDEE (450 aa)) are cytoplasmic. The segment at 608–661 (EGENAEEGLEEEDDEIEEEDYESEYSEDEEDKKRGSKKKVNKESSSEESGSDEE) is disordered. Residues 609 to 637 (GENAEEGLEEEDDEIEEEDYESEYSEDEE) are compositionally biased toward acidic residues.

As to quaternary structure, interacts with OEP61/TPR7. As to expression, expressed in leaves, flower buds and flowers.

It localises to the endoplasmic reticulum membrane. In terms of biological role, required for integral membrane and secreted preprotein translocation across the endoplasmic reticulum membrane. The protein is DnaJ protein ERDJ2B (ERDJ2B) of Arabidopsis thaliana (Mouse-ear cress).